The sequence spans 95 residues: Integration host factor subunit beta (95 aa).

Residues 57–76 are disordered; the sequence is APRTGRNPKTGDKVDLEGKY. The segment covering 65 to 76 has biased composition (basic and acidic residues); sequence KTGDKVDLEGKY.

Belongs to the bacterial histone-like protein family. Heterodimer of an alpha and a beta chain.

Its function is as follows. This protein is one of the two subunits of integration host factor, a specific DNA-binding protein that functions in genetic recombination as well as in transcriptional and translational control. The sequence is that of Integration host factor subunit beta from Enterobacter sp. (strain 638).